Consider the following 417-residue polypeptide: Transmembrane protease serine 11G (417 aa).

The Cytoplasmic segment spans residues 1-21 (MYQPGILVRRKRVWKPWTVAL). A helical; Signal-anchor for type II membrane protein membrane pass occupies residues 22–42 (ITVALLLALAVLIGLLVYFLV). Topologically, residues 43–417 (YDEKTHYYQA…RDWIKSKTSI (375 aa)) are extracellular. The SEA domain maps to 46-165 (KTHYYQASFW…PYLREMNAAQ (120 aa)). A glycan (N-linked (GlcNAc...) asparagine) is linked at N60. The Peptidase S1 domain occupies 186–416 (IADGKPADKA…YRDWIKSKTS (231 aa)). Cysteines 211 and 227 form a disulfide. Active-site charge relay system residues include H226 and D271. Cystine bridges form between C336-C352 and C363-C392. The active-site Charge relay system is the S367.

Belongs to the peptidase S1 family.

Its subcellular location is the membrane. This is Transmembrane protease serine 11G (Tmprss11g) from Mus musculus (Mouse).